Consider the following 242-residue polypeptide: Biosynthetic peptidoglycan transglycosylase (242 aa).

The chain crosses the membrane as a helical span at residues 19–39; it reads LMVVLAVFWGGGIALFSVAPV.

The protein belongs to the glycosyltransferase 51 family.

The protein localises to the cell inner membrane. The enzyme catalyses [GlcNAc-(1-&gt;4)-Mur2Ac(oyl-L-Ala-gamma-D-Glu-L-Lys-D-Ala-D-Ala)](n)-di-trans,octa-cis-undecaprenyl diphosphate + beta-D-GlcNAc-(1-&gt;4)-Mur2Ac(oyl-L-Ala-gamma-D-Glu-L-Lys-D-Ala-D-Ala)-di-trans,octa-cis-undecaprenyl diphosphate = [GlcNAc-(1-&gt;4)-Mur2Ac(oyl-L-Ala-gamma-D-Glu-L-Lys-D-Ala-D-Ala)](n+1)-di-trans,octa-cis-undecaprenyl diphosphate + di-trans,octa-cis-undecaprenyl diphosphate + H(+). It functions in the pathway cell wall biogenesis; peptidoglycan biosynthesis. Peptidoglycan polymerase that catalyzes glycan chain elongation from lipid-linked precursors. The sequence is that of Biosynthetic peptidoglycan transglycosylase from Escherichia coli (strain ATCC 8739 / DSM 1576 / NBRC 3972 / NCIMB 8545 / WDCM 00012 / Crooks).